The sequence spans 505 residues: Probable Xaa-Pro aminopeptidase Pc16g13390 (505 aa).

Residues D287, D298, E436, and E475 each coordinate Mn(2+).

Belongs to the peptidase M24B family. The cofactor is Mn(2+).

It catalyses the reaction Release of any N-terminal amino acid, including proline, that is linked to proline, even from a dipeptide or tripeptide.. Catalyzes the removal of a penultimate prolyl residue from the N-termini of peptides. The sequence is that of Probable Xaa-Pro aminopeptidase Pc16g13390 from Penicillium rubens (strain ATCC 28089 / DSM 1075 / NRRL 1951 / Wisconsin 54-1255) (Penicillium chrysogenum).